The sequence spans 260 residues: MIPGTETIRNVIADLRIAASFVTLLPVGSSKPAADGAIARATWALPVAGLLVGLAGALVYKISSRLGLTPNLAALLALATTALITGALHEDGLADTADGLGGGRTRERKLEIMRDSRIGTYGVCALILSFGLRWSALAAIANPWLVTLALCAAHCAARAGVPAFMSLVPPARPDGLSASAGAPPGRSVAIAFAVGTLVLTLALGPGKALVGLILLSLAGLILARLAIRQIGGQTGDILGAFEQTGEIVILLVAAAFQMGR.

7 helical membrane-spanning segments follow: residues 42–62, 68–88, 118–137, 144–166, 180–200, 201–221, and 237–257; these read TWALPVAGLLVGLAGALVYKI, LTPNLAALLALATTALITGAL, IGTYGVCALILSFGLRWSAL, WLVTLALCAAHCAARAGVPAFMS, AGAPPGRSVAIAFAVGTLVLT, LALGPGKALVGLILLSLAGLI, and ILGAFEQTGEIVILLVAAAFQ.

The protein belongs to the CobS family. Mg(2+) serves as cofactor.

The protein localises to the cell inner membrane. The enzyme catalyses alpha-ribazole + adenosylcob(III)inamide-GDP = adenosylcob(III)alamin + GMP + H(+). The catalysed reaction is alpha-ribazole 5'-phosphate + adenosylcob(III)inamide-GDP = adenosylcob(III)alamin 5'-phosphate + GMP + H(+). Its pathway is cofactor biosynthesis; adenosylcobalamin biosynthesis; adenosylcobalamin from cob(II)yrinate a,c-diamide: step 7/7. Functionally, joins adenosylcobinamide-GDP and alpha-ribazole to generate adenosylcobalamin (Ado-cobalamin). Also synthesizes adenosylcobalamin 5'-phosphate from adenosylcobinamide-GDP and alpha-ribazole 5'-phosphate. The protein is Adenosylcobinamide-GDP ribazoletransferase of Bradyrhizobium diazoefficiens (strain JCM 10833 / BCRC 13528 / IAM 13628 / NBRC 14792 / USDA 110).